The following is a 674-amino-acid chain: Translation factor GUF1, mitochondrial (674 aa).

The transit peptide at 1–48 (MRGCLQPARWLTTATLRRPLLSCPRQLPTRYNPFPRPFHHAPVLQARQ) directs the protein to the mitochondrion. A tr-type G domain is found at 66–246 (ERYRNFCIVA…AIIESIPALL (181 aa)). GTP-binding positions include 75–82 (AHVDHGKS), 139–143 (DTPGH), and 193–196 (NKVD).

The protein belongs to the TRAFAC class translation factor GTPase superfamily. Classic translation factor GTPase family. LepA subfamily.

Its subcellular location is the mitochondrion inner membrane. It catalyses the reaction GTP + H2O = GDP + phosphate + H(+). Its function is as follows. Promotes mitochondrial protein synthesis. May act as a fidelity factor of the translation reaction, by catalyzing a one-codon backward translocation of tRNAs on improperly translocated ribosomes. Binds to mitochondrial ribosomes in a GTP-dependent manner. This Arthroderma otae (strain ATCC MYA-4605 / CBS 113480) (Microsporum canis) protein is Translation factor GUF1, mitochondrial.